A 334-amino-acid chain; its full sequence is uncharacterized protein (334 aa).

WD repeat units lie at residues 56 to 86 (LKGE…KLWT), 98 to 128 (KPVA…RIWD), 139 to 169 (GHTS…EGWS), 220 to 250 (TDQG…RVFN), and 262 to 291 (LDDG…RVWN).

This is an uncharacterized protein from Synechocystis sp. (strain ATCC 27184 / PCC 6803 / Kazusa).